A 321-amino-acid chain; its full sequence is Transcription factor MYB60 (321 aa).

2 consecutive HTH myb-type domains span residues 9–65 (KVGI…RPGI) and 66–116 (KRGN…KKKI). DNA-binding regions (H-T-H motif) lie at residues 37-61 (WRSV…TNYL) and 89-112 (WAAI…NTHL). 2 positions are modified to S-nitrosocysteine: Cys-49 and Cys-53. 2 disordered regions span residues 196–215 (SPKA…EGSI) and 263–291 (HHQT…QKKH). Residues 206–215 (QNSSLEEGSI) are compositionally biased toward polar residues. Residues 273–290 (SDDHDHDHEMKMDHDQKK) show a composition bias toward basic and acidic residues.

Restricted to stomatal guard cells. Mostly expressed in leaves, cotyledons, hypocotyls, seeds and ripened berry skins.

It localises to the nucleus. In terms of biological role, transcription factor involved in the regulation of gene (e.g. drought-regulated and flavonoid biosynthetic genes) expression and stomatal movements leading to negative regulation of responses to drought and responses to other physiological stimuli (e.g. light). The chain is Transcription factor MYB60 from Vitis vinifera (Grape).